A 494-amino-acid polypeptide reads, in one-letter code: Transcription termination factor MTERF4, chloroplastic (494 aa).

A chloroplast-targeting transit peptide spans 1–54 (MMKSLLFSAHPTSLLLPAPRLRRLLRLRAASSASASAPPRADRRSPGTPSRRPS). Disordered stretches follow at residues 32–61 (SASA…YARP) and 457–494 (VEEM…EFVR). Residues 46–56 (PGTPSRRPSSS) are compositionally biased toward low complexity. Composition is skewed to acidic residues over residues 457-466 (VEEMEREDSS) and 473-494 (DEVE…EFVR).

This sequence belongs to the mTERF family.

The protein localises to the plastid. It localises to the chloroplast stroma. In terms of biological role, transcription termination factor required for processing and steady-state levels of plastid transcripts. Required for splicing of the chloroplastic group II intron. Required for the accumulation of 16S and 23S ribosomes. The polypeptide is Transcription termination factor MTERF4, chloroplastic (Zea mays (Maize)).